The following is a 640-amino-acid chain: DNA mismatch repair protein MutL (640 aa).

2 disordered regions span residues 332 to 353 (PNVQ…FNFP) and 408 to 431 (PAHT…TFHD).

It belongs to the DNA mismatch repair MutL/HexB family.

In terms of biological role, this protein is involved in the repair of mismatches in DNA. It is required for dam-dependent methyl-directed DNA mismatch repair. May act as a 'molecular matchmaker', a protein that promotes the formation of a stable complex between two or more DNA-binding proteins in an ATP-dependent manner without itself being part of a final effector complex. This is DNA mismatch repair protein MutL from Chloroherpeton thalassium (strain ATCC 35110 / GB-78).